The sequence spans 496 residues: probable leucine aminopeptidase 2 (496 aa).

An N-terminal signal peptide occupies residues 1-16 (MRSLLWASLLSGVLAG). In terms of domain architecture, PA spans 111 to 205 (PSVEVTADVA…SLEDGQKLIK (95 aa)). N-linked (GlcNAc...) asparagine glycosylation is present at asparagine 224. Zn(2+) contacts are provided by histidine 248 and aspartate 260. Glutamate 292 serves as the catalytic Proton acceptor. Glutamate 293 is a binding site for Zn(2+). Asparagine 307 is a glycosylation site (N-linked (GlcNAc...) asparagine). Residue aspartate 321 participates in Zn(2+) binding. Asparagine 341 and asparagine 402 each carry an N-linked (GlcNAc...) asparagine glycan. Position 419 (histidine 419) interacts with Zn(2+). Asparagine 424 and asparagine 458 each carry an N-linked (GlcNAc...) asparagine glycan. The segment at 475–496 (KRAPKTHAHVSGSGCWHSQVEA) is disordered.

This sequence belongs to the peptidase M28 family. M28A subfamily. Monomer. It depends on Zn(2+) as a cofactor.

It is found in the secreted. In terms of biological role, extracellular aminopeptidase that releases a wide variety of amino acids from natural peptides. In Aspergillus oryzae (strain ATCC 42149 / RIB 40) (Yellow koji mold), this protein is probable leucine aminopeptidase 2 (lap2).